Consider the following 45-residue polypeptide: Large ribosomal subunit protein bL34 (45 aa).

The disordered stretch occupies residues 1–27 (MTKRTLGGTSRKRKRVSGFRVRMRSHT). Residues 10-27 (SRKRKRVSGFRVRMRSHT) are compositionally biased toward basic residues.

The protein belongs to the bacterial ribosomal protein bL34 family.

This chain is Large ribosomal subunit protein bL34, found in Synechococcus sp. (strain CC9902).